The sequence spans 237 residues: Protein CUSTOS (237 aa).

Disordered regions lie at residues 1–23, 50–69, and 97–237; these read MAAP…LDRF, LRVR…TTPE, and ISKA…LGNE. Over residues 52-62 the composition is skewed to basic and acidic residues; it reads VRPDCHEHDGN. Residues 162-177 are compositionally biased toward polar residues; the sequence is STLQQEPQSTPSNVCD. Positions 181–190 are enriched in basic residues; that stretch reads PKKKRKKKKK. Positions 182–190 match the Nucleolar localization signal (NLS1) motif; the sequence is KKKRKKKKK. 2 stretches are compositionally biased toward basic and acidic residues: residues 203 to 216 and 225 to 237; these read ETMH…ELQA and KLEM…LGNE. Residues 217 to 225 carry the Nucleolar localization signal (NLS2) motif; sequence KRKKKKKQK.

The protein belongs to the CUSTOS family. Interacts (via NLS1 and NLS2) with dvl2; the interaction is negatively regulated by Wnt stimulation. Interacts with csnk1a1. Interacts with ctnnb1; the interaction is positively regulated by Wnt stimulation. Post-translationally, phosphorylated by ck1/csnk1a1.

The protein resides in the nucleus envelope. Essential for Spemann-Mangold organizer formation and subsequent anterior head development in the embryo. Inhibits canonical Wnt signaling pathway by antagonizing nuclear import of beta-catenin (ctnnb1) during embryogenesis. The protein is Protein CUSTOS of Xenopus laevis (African clawed frog).